The following is a 694-amino-acid chain: Acetolactate synthase catalytic subunit, mitochondrial (694 aa).

A mitochondrion-targeting transit peptide spans Met-1–Glu-42. A compositionally biased stretch (low complexity) spans Val-45–Ser-58. Residues Val-45 to Asn-69 form a disordered region. A compositionally biased stretch (polar residues) spans Gln-59–Asn-69. Glu-140 contacts thiamine diphosphate. Residues Arg-242, His-358–Arg-379, and Glu-410–Asp-429 each bind FAD. The segment at Gln-505–Glu-585 is thiamine pyrophosphate binding. Positions 556, 583, and 585 each coordinate Mg(2+).

It belongs to the TPP enzyme family. As to quaternary structure, homodimer. Mg(2+) serves as cofactor. Requires thiamine diphosphate as cofactor.

Its subcellular location is the mitochondrion. The enzyme catalyses 2 pyruvate + H(+) = (2S)-2-acetolactate + CO2. It carries out the reaction 2-oxobutanoate + pyruvate + H(+) = (S)-2-ethyl-2-hydroxy-3-oxobutanoate + CO2. The protein operates within amino-acid biosynthesis; L-isoleucine biosynthesis; L-isoleucine from 2-oxobutanoate: step 1/4. It participates in amino-acid biosynthesis; L-valine biosynthesis; L-valine from pyruvate: step 1/4. In terms of biological role, acetolactate synthase catalytic subunit, mitochondrial; part of the gene cluster that mediates the biosynthesis of chlorflavonin, a fungal flavonoid with acetolactate synthase inhibitory activity. Is not direcly involved in chlorflavonin biosynthesis but acts as a self-resistant protein that effectively confers chlorflavonin resistance to the native host. As a catalytic subunit of mitochondrial acetolactate synthase, catalyzes the first of a series of common steps in the biosynthesis of the branched-chain amino acids. Catalyzes the irreversible decarboxylation of pyruvate to a bound hydroxyethyl group that then condenses with either a second pyruvate molecule to form 2-acetolactate (AL) or with 2-ketobutyrate to form 2-aceto-2-hydroxybutyrate (AHB). The first product is the precursor for valine and leucine biosynthesis, while the second leads to isoleucine. This Aspergillus candidus protein is Acetolactate synthase catalytic subunit, mitochondrial.